The chain runs to 261 residues: (3R)-3-hydroxyacyl-CoA dehydrogenase (261 aa).

Residues 15-23 (LVTGAGSGI) and 42-43 (DL) each bind NAD(+). Serine 60 bears the Phosphoserine mark. 74–76 (ADV) is an NAD(+) binding site. Serine 156 is a substrate binding site. N6-succinyllysine is present on lysine 160. Catalysis depends on tyrosine 169, which acts as the Proton acceptor. NAD(+) contacts are provided by residues 169–173 (YAASK) and 202–204 (IAT). Position 173 is an N6-succinyllysine (lysine 173).

The protein belongs to the short-chain dehydrogenases/reductases (SDR) family. In terms of assembly, heterotetramer with CBR4; contains two molecules of HSD17B8 and CBR4. As to expression, widely expressed, particularly abundant in prostate, placenta and kidney. Expressed at protein level in various tissues like brain, cerebellum, heart, lung, kidney, ovary, testis, adrenals and prostate.

It localises to the mitochondrion matrix. It catalyses the reaction a (3R)-3-hydroxyacyl-CoA + NAD(+) = a 3-oxoacyl-CoA + NADH + H(+). The enzyme catalyses 17beta-estradiol + NAD(+) = estrone + NADH + H(+). It carries out the reaction testosterone + NAD(+) = androst-4-ene-3,17-dione + NADH + H(+). The catalysed reaction is 17beta-hydroxy-5alpha-androstan-3-one + NAD(+) = 5alpha-androstan-3,17-dione + NADH + H(+). Its pathway is steroid biosynthesis; estrogen biosynthesis. It functions in the pathway lipid metabolism; fatty acid biosynthesis. It participates in lipid metabolism; mitochondrial fatty acid beta-oxidation. Its function is as follows. Required for the solubility and assembly of the heterotetramer 3-ketoacyl-[acyl carrier protein] (ACP) reductase functional complex (KAR or KAR1) that forms part of the mitochondrial fatty acid synthase (mtFAS). Alpha-subunit of the KAR complex that acts as a scaffold protein required for the stability of carbonyl reductase type-4 (CBR4, beta-subunit of the KAR complex) and for its 3-ketoacyl-ACP reductase activity, thereby participating in mitochondrial fatty acid biosynthesis. Catalyzes the NAD-dependent conversion of (3R)-3-hydroxyacyl-CoA into 3-ketoacyl-CoA (3-oxoacyl-CoA) with no chain length preference; this enzymatic activity is not needed for the KAR function. Prefers (3R)-3-hydroxyacyl-CoA over (3S)-3-hydroxyacyl-CoA and displays enzymatic activity only in the presence of NAD(+). Cooperates with enoyl-CoA hydratase 1 in mitochondria, together they constitute an alternative route to the auxiliary enzyme pathways for the breakdown of Z-PUFA (cis polyunsaturated fatty acid) enoyl-esters. NAD-dependent 17-beta-hydroxysteroid dehydrogenase with highest activity towards estradiol (17beta-estradiol or E2). Has very low activity towards testosterone and dihydrotestosterone (17beta-hydroxy-5alpha-androstan-3-one). Primarily an oxidative enzyme, it can switch to a reductive mode determined in the appropriate physiologic milieu and catalyze the reduction of estrone (E1) to form biologically active 17beta-estradiol. This chain is (3R)-3-hydroxyacyl-CoA dehydrogenase (HSD17B8), found in Homo sapiens (Human).